A 195-amino-acid chain; its full sequence is Probable DNA-directed RNA polymerase subunit delta (195 aa).

Residues 14–81 (LSMIEVAHAI…GDNTWGLRAW (68 aa)) form the HTH HARE-type domain. A disordered region spans residues 91-195 (TVGETEDEED…DEEDKEDDEE (105 aa)). Composition is skewed to acidic residues over residues 116–171 (TDDD…EDQL) and 179–195 (FGDD…DDEE).

Belongs to the RpoE family. In terms of assembly, RNAP is composed of a core of 2 alpha, a beta and a beta' subunits. The core is associated with a delta subunit and one of several sigma factors.

In terms of biological role, participates in both the initiation and recycling phases of transcription. In the presence of the delta subunit, RNAP displays an increased specificity of transcription, a decreased affinity for nucleic acids, and an increased efficiency of RNA synthesis because of enhanced recycling. The polypeptide is Probable DNA-directed RNA polymerase subunit delta (Limosilactobacillus fermentum (strain NBRC 3956 / LMG 18251) (Lactobacillus fermentum)).